Reading from the N-terminus, the 158-residue chain is SsrA-binding protein (158 aa).

Belongs to the SmpB family.

It localises to the cytoplasm. Its function is as follows. Required for rescue of stalled ribosomes mediated by trans-translation. Binds to transfer-messenger RNA (tmRNA), required for stable association of tmRNA with ribosomes. tmRNA and SmpB together mimic tRNA shape, replacing the anticodon stem-loop with SmpB. tmRNA is encoded by the ssrA gene; the 2 termini fold to resemble tRNA(Ala) and it encodes a 'tag peptide', a short internal open reading frame. During trans-translation Ala-aminoacylated tmRNA acts like a tRNA, entering the A-site of stalled ribosomes, displacing the stalled mRNA. The ribosome then switches to translate the ORF on the tmRNA; the nascent peptide is terminated with the 'tag peptide' encoded by the tmRNA and targeted for degradation. The ribosome is freed to recommence translation, which seems to be the essential function of trans-translation. The sequence is that of SsrA-binding protein from Parafrankia sp. (strain EAN1pec).